Here is a 343-residue protein sequence, read N- to C-terminus: Probable 4-hydroxy-tetrahydrodipicolinate reductase 1, chloroplastic (343 aa).

A chloroplast-targeting transit peptide spans 1–14; that stretch reads MLASTFATHPAAAA. Residues 167–169 and 190–193 contribute to the NAD(+) site; these read GTT and SPQM. His-226 acts as the Proton donor/acceptor in catalysis. Lys-230 functions as the Proton donor in the catalytic mechanism. (S)-2,3,4,5-tetrahydrodipicolinate is bound at residue 235–236; that stretch reads GT.

The protein belongs to the DapB family.

The protein localises to the plastid. It is found in the chloroplast. It catalyses the reaction (S)-2,3,4,5-tetrahydrodipicolinate + NAD(+) + H2O = (2S,4S)-4-hydroxy-2,3,4,5-tetrahydrodipicolinate + NADH + H(+). The enzyme catalyses (S)-2,3,4,5-tetrahydrodipicolinate + NADP(+) + H2O = (2S,4S)-4-hydroxy-2,3,4,5-tetrahydrodipicolinate + NADPH + H(+). Its pathway is amino-acid biosynthesis; L-lysine biosynthesis via DAP pathway; (S)-tetrahydrodipicolinate from L-aspartate: step 4/4. Functionally, catalyzes the conversion of 4-hydroxy-tetrahydrodipicolinate (HTPA) to tetrahydrodipicolinate. In Oryza sativa subsp. japonica (Rice), this protein is Probable 4-hydroxy-tetrahydrodipicolinate reductase 1, chloroplastic (DAPB1).